Here is a 149-residue protein sequence, read N- to C-terminus: Decarboxylase AgnL1 (149 aa).

Residues 30-125 (PGMSEEDYRH…VGDHEKFADT (96 aa)) enclose the EthD domain.

This sequence belongs to the tpcK family.

The catalysed reaction is atrochrysone carboxylate + H(+) = atrochrysone + CO2. The protein operates within secondary metabolite biosynthesis. Its function is as follows. Decarboxylase; part of the gene cluster that mediates the biosynthesis of agnestins, dihydroxy-xanthone metabolites. The pathway begins with the assembly and cyclization of atrochrysone thioester by the non-reducing polyketide synthase Agnpks1. The atrochrysone carboxyl ACP thioesterase AgnL7 then breaks the thioester bond and releases the atrochrysone carboxylic acid as the first enzyme-free intermediate. The decarboxylase AgnL1 then catalyzes the concerted decarboxylation-elimination required to convert atochrysone carboxylic acid into emodin anthrone, which is further oxidized to emodin by the anthrone oxygenase AgnL2. Emodin then undergoes reduction catalyzed by the oxidoreductase AgnL4 to yield the dihydroquinone tautomer which is the substrate for reduction by the short chain dehydrogenase AgnL6 reduction to produce hydroxyketone, followed by AgnL8 dehydration and likely spontaneous autoxidation to chrysophanol. Baeyer-Villiger oxidation by the oxidase AgnL3 leads to monodictyphenone via cleavage of the C-10/C-10a bond of chrysophanol. Alternative cleavage at the C-4a/C-10 bond of chrysophanol also leads to the formation some cephalone F. Further conversion to agnestins A and B, requires reduction to dihydro-monodictyphenone, oxidation to agnestin C probably via an epoxide, and rearrangement to either agnestin A or agnestin B directly, although agnestin A or agnestin B can also interconvert. Within the cluster, AgnR1 is the only unassigned oxidoreductase present which could be involved in this conversion. However, AgnR1 seems not to be involved in this step, and thus genes involved in the proposed oxidation/reduction may be located elsewhere on the genome. Further agnestin A derivatives are probably formed by spontaneous decarboxylations, dehydrations and methanolysis reactions. The protein is Decarboxylase AgnL1 of Paecilomyces divaricatus (Penicillium divaricatum).